The following is a 421-amino-acid chain: Imidazolonepropionase (421 aa).

Fe(3+) contacts are provided by His-81 and His-83. His-81 and His-83 together coordinate Zn(2+). Residues Arg-90, Tyr-153, and His-186 each coordinate 4-imidazolone-5-propanoate. Residue Tyr-153 participates in N-formimidoyl-L-glutamate binding. His-251 is a Fe(3+) binding site. His-251 provides a ligand contact to Zn(2+). Glu-254 lines the 4-imidazolone-5-propanoate pocket. Asp-326 contributes to the Fe(3+) binding site. Zn(2+) is bound at residue Asp-326. N-formimidoyl-L-glutamate contacts are provided by Asn-328 and Gly-330. Ser-331 is a binding site for 4-imidazolone-5-propanoate.

It belongs to the metallo-dependent hydrolases superfamily. HutI family. The cofactor is Zn(2+). Fe(3+) serves as cofactor.

The protein localises to the cytoplasm. The catalysed reaction is 4-imidazolone-5-propanoate + H2O = N-formimidoyl-L-glutamate. Its pathway is amino-acid degradation; L-histidine degradation into L-glutamate; N-formimidoyl-L-glutamate from L-histidine: step 3/3. In terms of biological role, catalyzes the hydrolytic cleavage of the carbon-nitrogen bond in imidazolone-5-propanoate to yield N-formimidoyl-L-glutamate. It is the third step in the universal histidine degradation pathway. The sequence is that of Imidazolonepropionase from Streptococcus gordonii (strain Challis / ATCC 35105 / BCRC 15272 / CH1 / DL1 / V288).